We begin with the raw amino-acid sequence, 365 residues long: MGMPLPWALSLLLVLLPQTWGSETRPPLMYHLTAVSNPSTGLPSFWATGWLGPQQYLTYNSLRQEADPCGAWMWENQVSWYWEKETTDLKSKEQLFLEALKTLEKILNGTYTLQGLLGCELASDNSSVPTAVFALNGEEFMKFNPRIGNWTGEWPETEIVANLWMKQPDAARKESEFLLNSCPERLLGHLERGRRNLEWKEPPSMRLKARPGNSGSSVLTCAAFSFYPPELKFRFLRNGLASGSGNCSTGPNGDGSFHAWSLLEVKRGDEHHYQCQVEHEGLAQPLTVDLDSSARSSVPVVGIVLGLLLVVVAIAGGVLLWGRMRSGLPAPWLSLSGDDSGDLLPGGNLPPEAEPQGANAFPATS.

The signal sequence occupies residues 1–21; that stretch reads MGMPLPWALSLLLVLLPQTWG. An alpha-1 region spans residues 22-110; it reads SETRPPLMYH…KTLEKILNGT (89 aa). The Extracellular portion of the chain corresponds to 22-297; it reads SETRPPLMYH…VDLDSSARSS (276 aa). Residues N108, N125, N149, and N246 are each glycosylated (N-linked (GlcNAc...) asparagine). The alpha-2 stretch occupies residues 111–200; the sequence is YTLQGLLGCE…ERGRRNLEWK (90 aa). Disulfide bonds link C119-C182 and C221-C275. Residues 201 to 290 are alpha-3; the sequence is EPPSMRLKAR…GLAQPLTVDL (90 aa). Residues 202–289 form the Ig-like C1-type domain; sequence PPSMRLKARP…EGLAQPLTVD (88 aa). A connecting peptide region spans residues 291 to 297; the sequence is DSSARSS. The helical transmembrane segment at 298–321 threads the bilayer; sequence VPVVGIVLGLLLVVVAIAGGVLLW. The Cytoplasmic segment spans residues 322–365; it reads GRMRSGLPAPWLSLSGDDSGDLLPGGNLPPEAEPQGANAFPATS. Residue S334 is modified to Phosphoserine. A disordered region spans residues 343–365; it reads LLPGGNLPPEAEPQGANAFPATS.

It belongs to the immunoglobulin superfamily. FcRn complex consists of two subunits: p51, and p14 which is equivalent to beta-2-microglobulin. It forms an MHC class I-like heterodimer. Interacts with albumin/ALB; this interaction regulates ALB homeostasis. Intestinal epithelium of suckling rodents. Expressed in neonatal intestine and fetal yolk sac.

The protein resides in the cell membrane. Its subcellular location is the endosome membrane. In terms of biological role, cell surface receptor that transfers passive humoral immunity from the mother to the newborn. Binds to the Fc region of monomeric immunoglobulin gamma and mediates its selective uptake from milk. IgG in the milk is bound at the apical surface of the intestinal epithelium. The resultant FcRn-IgG complexes are transcytosed across the intestinal epithelium and IgG is released from FcRn into blood or tissue fluids. Throughout life, contributes to effective humoral immunity by recycling IgG and extending its half-life in the circulation. Mechanistically, monomeric IgG binding to FcRn in acidic endosomes of endothelial and hematopoietic cells recycles IgG to the cell surface where it is released into the circulation. In addition of IgG, regulates homeostasis of the other most abundant circulating protein albumin/ALB. This is IgG receptor FcRn large subunit p51 (Fcgrt) from Mus musculus (Mouse).